Here is a 461-residue protein sequence, read N- to C-terminus: Lysosomal proton-coupled steroid conjugate and bile acid symporter SLC46A3 (461 aa).

The signal sequence occupies residues 1–25; that stretch reads MKILFVEPAIFLSAFAMTLTGPLTT. The Extracellular portion of the chain corresponds to 26–73; the sequence is QYVYRRIWEETGNYTFSSDSNISECEKNKSSPIFAFQEEVQKKVSRFN. N-linked (GlcNAc...) asparagine glycans are attached at residues Asn38, Asn46, and Asn53. Residues 74-94 form a helical membrane-spanning segment; it reads LQMDISGLIPGLVSTFILLSI. The Cytoplasmic segment spans residues 95-101; it reads SDHYGRK. Residues 102 to 124 form a helical membrane-spanning segment; that stretch reads FPMILSSVGALATSVWLCLLCYF. Over 125–133 the chain is Extracellular; sequence AFPFQLLIA. Residues 134–156 traverse the membrane as a helical segment; it reads STFIGAFCGNYTTFWGACFAYIV. Over 157-170 the chain is Cytoplasmic; sequence DQCKEHKQKTIRIA. Residues 171–191 traverse the membrane as a helical segment; sequence IIDFLLGLVTGLTGLSSGYFI. The Extracellular portion of the chain corresponds to 192–197; that stretch reads RELGFE. The helical transmembrane segment at 198–218 threads the bilayer; sequence WSFLIIAVSLAVNLIYILFFL. Residues 219-261 lie on the Cytoplasmic side of the membrane; the sequence is GDPVKECSSQNVTMSCSEGFKNLFYRTYMLFKNASGKRRFLLC. A helical membrane pass occupies residues 262–282; it reads LLLFTVITYFFVVIGIAPIFI. The Extracellular segment spans residues 283–294; that stretch reads LYELDSPLCWNE. Residues 295–315 form a helical membrane-spanning segment; it reads VFIGYGSALGSASFLTSFLGI. Over 316 to 324 the chain is Cytoplasmic; that stretch reads WLFSYCMED. The helical transmembrane segment at 325–345 threads the bilayer; sequence IHMAFIGIFTTMTGMAMTAFA. The Extracellular segment spans residues 346-347; sequence ST. The helical transmembrane segment at 348 to 368 threads the bilayer; sequence TLMMFLARVPFLFTIVPFSVL. The Cytoplasmic portion of the chain corresponds to 369 to 382; it reads RSMLSKVVRSTEQG. A helical transmembrane segment spans residues 383–403; that stretch reads TLFACIAFLETLGGVTAVSTF. At 404–415 the chain is on the extracellular side; the sequence is NGIYSATVAWYP. Residues 416-436 traverse the membrane as a helical segment; sequence GFTFLLSAGLLLLPAISLCVV. The Cytoplasmic portion of the chain corresponds to 437-461; it reads KCTSWNEGSYELLIQEESSEDASDR. Residues 446 to 449 carry the Tyrosine-based lysosomal-sorting motif motif; sequence YELL.

It belongs to the major facilitator superfamily. SLC46A family.

It is found in the lysosome membrane. It catalyses the reaction estrone 3-sulfate(out) + n H(+)(out) = estrone 3-sulfate(in) + n H(+)(in). The catalysed reaction is 25-hydroxyvitamin D3 sulfate(out) + n H(+)(out) = 25-hydroxyvitamin D3 sulfate(in) + n H(+)(in). The enzyme catalyses cholate(out) + n H(+)(out) = cholate(in) + n H(+)(in). It carries out the reaction glycocholate(out) + n H(+)(out) = glycocholate(in) + n H(+)(in). It catalyses the reaction taurocholate(out) + n H(+)(out) = taurocholate(in) + n H(+)(in). The catalysed reaction is dehydroepiandrosterone 3-sulfate(out) + n H(+)(out) = dehydroepiandrosterone 3-sulfate(in) + n H(+)(in). The enzyme catalyses N-acetyl-D-muramoyl-L-alanyl-D-isoglutamine(out) + n H(+)(out) = N-acetyl-D-muramoyl-L-alanyl-D-isoglutamine(in) + n H(+)(in). It carries out the reaction 2',3'-cGAMP(out) + n H(+)(out) = 2',3'-cGAMP(in) + n H(+)(in). Functionally, lysosomal proton-coupled steroid conjugate and bile acid transporter. Preferentially recognizes lipophilic steroid conjugates or bile acis as endogenous substrates and seems to mediate escape from lysosomes to the cytoplasm. Modulates hepatic cytosolic copper homeostasis, maybe acting as a lysosomal copper transporter and sequestering copper ions in the lysosome. Transports catabolites of non-cleavable antibody-drug conjugates from the lysosome to the cytoplasm. Delivers pathogen-associated molecular patterns to cytosolic pattern recognition receptors as part of the innate immune response to microbes. Selectively transports bacterial muramyl dipeptide (MDP) into the cytosol for recognition by NOD2, triggering inflammatory responses. Likely acts as a redundant importer of cyclic GMP-AMP dinucleotides (cGAMPs) in monocyte and macrophage cell lineages. The transport mechanism, its electrogenicity and stoichiometry remain to be elucidated. The chain is Lysosomal proton-coupled steroid conjugate and bile acid symporter SLC46A3 from Homo sapiens (Human).